The following is a 338-amino-acid chain: Phosphate acyltransferase (338 aa).

It belongs to the PlsX family. As to quaternary structure, homodimer. Probably interacts with PlsY.

Its subcellular location is the cytoplasm. The enzyme catalyses a fatty acyl-[ACP] + phosphate = an acyl phosphate + holo-[ACP]. It functions in the pathway lipid metabolism; phospholipid metabolism. Catalyzes the reversible formation of acyl-phosphate (acyl-PO(4)) from acyl-[acyl-carrier-protein] (acyl-ACP). This enzyme utilizes acyl-ACP as fatty acyl donor, but not acyl-CoA. This chain is Phosphate acyltransferase, found in Endomicrobium trichonymphae.